Here is a 319-residue protein sequence, read N- to C-terminus: HPr kinase/phosphorylase (319 aa).

Active-site residues include histidine 144 and lysine 165. Glycine 159–serine 166 is a binding site for ATP. Serine 166 provides a ligand contact to Mg(2+). The active-site Proton acceptor; for phosphorylation activity. Proton donor; for dephosphorylation activity is the aspartate 183. Positions methionine 207–asparagine 216 are important for the catalytic mechanism of both phosphorylation and dephosphorylation. Glutamate 208 is a binding site for Mg(2+). Arginine 249 is a catalytic residue. The segment at proline 270–arginine 275 is important for the catalytic mechanism of dephosphorylation.

It belongs to the HPrK/P family. Homohexamer. Requires Mg(2+) as cofactor.

It carries out the reaction [HPr protein]-L-serine + ATP = [HPr protein]-O-phospho-L-serine + ADP + H(+). The enzyme catalyses [HPr protein]-O-phospho-L-serine + phosphate + H(+) = [HPr protein]-L-serine + diphosphate. Catalyzes the ATP- as well as the pyrophosphate-dependent phosphorylation of a specific serine residue in HPr, a phosphocarrier protein of the phosphoenolpyruvate-dependent sugar phosphotransferase system (PTS). HprK/P also catalyzes the pyrophosphate-producing, inorganic phosphate-dependent dephosphorylation (phosphorolysis) of seryl-phosphorylated HPr (P-Ser-HPr). The protein is HPr kinase/phosphorylase of Geobacter sulfurreducens (strain ATCC 51573 / DSM 12127 / PCA).